Reading from the N-terminus, the 302-residue chain is Protein transport protein SEC13 homolog A (302 aa).

6 WD repeats span residues 9–48, 54–95, 101–142, 148–201, 208–251, and 257–296; these read GHSD…GSQH, GHRG…QWTQ, DHKV…GWDT, AHPV…WKMD, KHTD…EQWE, and DFKT…EWEQ.

Belongs to the WD repeat SEC13 family. As to quaternary structure, interacts with MAG5, SEC31A and SEC31B.

It is found in the golgi apparatus. The protein localises to the endoplasmic reticulum. Required for protein transport from the endoplasmic reticulum to the Golgi apparatus. This is Protein transport protein SEC13 homolog A from Arabidopsis thaliana (Mouse-ear cress).